We begin with the raw amino-acid sequence, 261 residues long: Cytochrome c oxidase subunit 3 (261 aa).

Topologically, residues 1 to 15 (MTHQTHAYHTVNPSP) are mitochondrial matrix. The helical transmembrane segment at 16–34 (WPLTGALSALLMTSGLIMW) threads the bilayer. The Mitochondrial intermembrane portion of the chain corresponds to 35–40 (FHFNSP). Residues 41–66 (LLLVLGLTTNFLTMYQWWRDIIREST) traverse the membrane as a helical segment. The Mitochondrial matrix portion of the chain corresponds to 67-72 (FQGHHT). Residues 73 to 105 (TIVQKGLRYGMILFIVSEVFFFAGFFWAFYHSS) traverse the membrane as a helical segment. The Mitochondrial intermembrane segment spans residues 106-128 (LAPTPELGGCWPPTGINPLNPLE). The helical transmembrane segment at 129-152 (VPLLNTSVLLASGVSITWAHHSLM) threads the bilayer. Residues 153-155 (EGH) are Mitochondrial matrix-facing. A helical transmembrane segment spans residues 156-183 (RKHMLQALFITIALGVYFTLLQASEYYE). Over 184 to 190 (APFTISD) the chain is Mitochondrial intermembrane. The helical transmembrane segment at 191–223 (GIYGSTFFVATGFHGLHVIIGSSFLIVCFMRQL) threads the bilayer. Over 224–232 (KFHFTSSHH) the chain is Mitochondrial matrix. A helical membrane pass occupies residues 233-256 (FGFEAAAWYWHFVDVVWLFLYVSI). Over 257-261 (YWWGS) the chain is Mitochondrial intermembrane.

It belongs to the cytochrome c oxidase subunit 3 family. As to quaternary structure, component of the cytochrome c oxidase (complex IV, CIV), a multisubunit enzyme composed of 14 subunits. The complex is composed of a catalytic core of 3 subunits MT-CO1, MT-CO2 and MT-CO3, encoded in the mitochondrial DNA, and 11 supernumerary subunits COX4I, COX5A, COX5B, COX6A, COX6B, COX6C, COX7A, COX7B, COX7C, COX8 and NDUFA4, which are encoded in the nuclear genome. The complex exists as a monomer or a dimer and forms supercomplexes (SCs) in the inner mitochondrial membrane with NADH-ubiquinone oxidoreductase (complex I, CI) and ubiquinol-cytochrome c oxidoreductase (cytochrome b-c1 complex, complex III, CIII), resulting in different assemblies (supercomplex SCI(1)III(2)IV(1) and megacomplex MCI(2)III(2)IV(2)).

The protein resides in the mitochondrion inner membrane. The enzyme catalyses 4 Fe(II)-[cytochrome c] + O2 + 8 H(+)(in) = 4 Fe(III)-[cytochrome c] + 2 H2O + 4 H(+)(out). In terms of biological role, component of the cytochrome c oxidase, the last enzyme in the mitochondrial electron transport chain which drives oxidative phosphorylation. The respiratory chain contains 3 multisubunit complexes succinate dehydrogenase (complex II, CII), ubiquinol-cytochrome c oxidoreductase (cytochrome b-c1 complex, complex III, CIII) and cytochrome c oxidase (complex IV, CIV), that cooperate to transfer electrons derived from NADH and succinate to molecular oxygen, creating an electrochemical gradient over the inner membrane that drives transmembrane transport and the ATP synthase. Cytochrome c oxidase is the component of the respiratory chain that catalyzes the reduction of oxygen to water. Electrons originating from reduced cytochrome c in the intermembrane space (IMS) are transferred via the dinuclear copper A center (CU(A)) of subunit 2 and heme A of subunit 1 to the active site in subunit 1, a binuclear center (BNC) formed by heme A3 and copper B (CU(B)). The BNC reduces molecular oxygen to 2 water molecules using 4 electrons from cytochrome c in the IMS and 4 protons from the mitochondrial matrix. The polypeptide is Cytochrome c oxidase subunit 3 (MT-CO3) (Dasypus novemcinctus (Nine-banded armadillo)).